Consider the following 422-residue polypeptide: MAVGLLLLAAGVGSRLSSSLPKAFVSVGGLDLIQWCLKNLGQLRTALEVVVTVPKGFVELCERNVLQSLGTLEKIKIVTGGATRQDSVGLGIRYFSARITKLLVHDVARAFTPPEIYLSVIKQLETSKAVIPVIAIVDSIKKVNMQDAYREVARGPGEPFHTKSVLHLDRREFFSAQTPQGFDRALLEAAHERSVASNEQFADDSVMVAQIEKDITLINGHEASFKVTNPCDLQRAEFAASSLLSKSNVSPVNISQPPISALSMPLPLIGVGIDFHKFILDESPLFLACLEWKNYRRLQGHSDGDVVAHACTTALLSAANMGDIGSVFGVDLAATKDASGAYFLESTNRLLATNGFCVLNIAVQVISNTPRLADRRVEAEHAISDCLSGARISLSSVTTDGMGFLGRGEGIGAIAVAQIYHR.

The 2-C-methyl-D-erythritol 4-phosphate cytidylyltransferase stretch occupies residues 1–267 (MAVGLLLLAA…PISALSMPLP (267 aa)). Residues 268-422 (LIGVGIDFHK…AIAVAQIYHR (155 aa)) are 2-C-methyl-D-erythritol 2,4-cyclodiphosphate synthase. 2 residues coordinate a divalent metal cation: Asp274 and His276. Residues 274–276 (DFH) and 301–302 (HS) contribute to the 4-CDP-2-C-methyl-D-erythritol 2-phosphate site. An a divalent metal cation-binding site is contributed by His309. Residues 323–325 (DIG), Phe404, and Arg407 contribute to the 4-CDP-2-C-methyl-D-erythritol 2-phosphate site.

This sequence in the N-terminal section; belongs to the IspD/TarI cytidylyltransferase family. IspD subfamily. In the C-terminal section; belongs to the IspF family. The cofactor is a divalent metal cation.

It catalyses the reaction 2-C-methyl-D-erythritol 4-phosphate + CTP + H(+) = 4-CDP-2-C-methyl-D-erythritol + diphosphate. The enzyme catalyses 4-CDP-2-C-methyl-D-erythritol 2-phosphate = 2-C-methyl-D-erythritol 2,4-cyclic diphosphate + CMP. Its pathway is isoprenoid biosynthesis; isopentenyl diphosphate biosynthesis via DXP pathway; isopentenyl diphosphate from 1-deoxy-D-xylulose 5-phosphate: step 2/6. The protein operates within isoprenoid biosynthesis; isopentenyl diphosphate biosynthesis via DXP pathway; isopentenyl diphosphate from 1-deoxy-D-xylulose 5-phosphate: step 4/6. In terms of biological role, bifunctional enzyme that catalyzes the formation of 4-diphosphocytidyl-2-C-methyl-D-erythritol from CTP and 2-C-methyl-D-erythritol 4-phosphate (MEP) (IspD), and catalyzes the conversion of 4-diphosphocytidyl-2-C-methyl-D-erythritol 2-phosphate (CDP-ME2P) to 2-C-methyl-D-erythritol 2,4-cyclodiphosphate (ME-CPP) with a corresponding release of cytidine 5-monophosphate (CMP) (IspF). In Tropheryma whipplei (strain TW08/27) (Whipple's bacillus), this protein is Bifunctional enzyme IspD/IspF.